The following is a 116-amino-acid chain: Iron-sulfur cluster insertion protein ErpA (116 aa).

The iron-sulfur cluster site is built by C44, C108, and C110.

It belongs to the HesB/IscA family. In terms of assembly, homodimer. The cofactor is iron-sulfur cluster.

In terms of biological role, required for insertion of 4Fe-4S clusters for at least IspG. This is Iron-sulfur cluster insertion protein ErpA from Nitrosococcus oceani (strain ATCC 19707 / BCRC 17464 / JCM 30415 / NCIMB 11848 / C-107).